The primary structure comprises 440 residues: Amino acid transporter AVT6D (440 aa).

11 helical membrane passes run 26–46 (FAGA…MAIP), 47–67 (AAFK…IAWL), 102–122 (AVTV…SIII), 149–169 (WNTR…PLVL), 182–202 (ISFL…IIAL), 219–239 (GGLS…AFTF), 262–282 (ISVI…YLLF), 309–329 (IVRL…NFSL), 356–376 (FPLL…WYFF), 377–397 (QFLG…AIVL), and 410–430 (IVAS…ISTN).

Belongs to the amino acid/polyamine transporter 2 family. Amino acid/auxin permease (AAAP) (TC 2.A.18.6) subfamily.

Its subcellular location is the membrane. This chain is Amino acid transporter AVT6D, found in Arabidopsis thaliana (Mouse-ear cress).